A 294-amino-acid polypeptide reads, in one-letter code: Cytidine deaminase (294 aa).

CMP/dCMP-type deaminase domains lie at 48–168 (DEDA…FGPK) and 186–294 (LEGD…VLLG). 89–91 (NME) contacts substrate. His102 contacts Zn(2+). The active-site Proton donor is the Glu104. Zn(2+) is bound by residues Cys129 and Cys132.

The protein belongs to the cytidine and deoxycytidylate deaminase family. In terms of assembly, homodimer. The cofactor is Zn(2+).

The enzyme catalyses cytidine + H2O + H(+) = uridine + NH4(+). It catalyses the reaction 2'-deoxycytidine + H2O + H(+) = 2'-deoxyuridine + NH4(+). Its function is as follows. This enzyme scavenges exogenous and endogenous cytidine and 2'-deoxycytidine for UMP synthesis. This Citrobacter koseri (strain ATCC BAA-895 / CDC 4225-83 / SGSC4696) protein is Cytidine deaminase.